A 95-amino-acid polypeptide reads, in one-letter code: Protein J1 homolog (95 aa).

This sequence belongs to the chordopoxvirinae J1 family. In terms of assembly, homodimer. Part of a complex composed of A30, G7, F10 kinase, A15, D2, D3, and J1. Interacts with A45.

It localises to the virion. The protein localises to the host cytoplasm. Its function is as follows. Late protein which is a part of a large complex required for early virion morphogenesis. This complex participates in the formation of virosomes and the incorporation of virosomal contents into nascent immature virions. J1 protein is required for DNA packaging during immature virions (IV) formation. The chain is Protein J1 homolog from Sus scrofa (Pig).